The following is a 727-amino-acid chain: NADH-ubiquinone oxidoreductase 75 kDa subunit, mitochondrial (727 aa).

Residues 1-23 constitute a mitochondrion transit peptide; the sequence is MLRIPVRKALVGLSKSPKGCVRT. In terms of domain architecture, 2Fe-2S ferredoxin-type spans 30–108; that stretch reads NLIEVFVDGQ…GWNILTNSEK (79 aa). 3 residues coordinate [2Fe-2S] cluster: Cys-64, Cys-75, and Cys-78. At Lys-84 the chain carries N6-acetyllysine. Cys-92 is a [2Fe-2S] cluster binding site. In terms of domain architecture, 4Fe-4S His(Cys)3-ligated-type spans 108–147; that stretch reads KSKKAREGVMEFLLANHPLDCPICDQGGECDLQDQSMMFG. 8 residues coordinate [4Fe-4S] cluster: His-124, Cys-128, Cys-131, Cys-137, Cys-176, Cys-179, Cys-182, and Cys-226. The region spanning 245–301 is the 4Fe-4S Mo/W bis-MGD-type domain; that stretch reads TRKTESIDVMDAVGSNIVVSTRTGEVMRILPRMHEDINEEWISDKTRFAYDGLKRQR. An N6-acetyllysine mark is found at Lys-467, Lys-499, and Lys-709.

Belongs to the complex I 75 kDa subunit family. In terms of assembly, core subunit of respiratory chain NADH dehydrogenase (Complex I) which is composed of 45 different subunits. This is the largest subunit of complex I and it is a component of the iron-sulfur (IP) fragment of the enzyme. Complex I associates with ubiquinol-cytochrome reductase complex (Complex III) to form supercomplexes. Interacts with MDM2 and AKAP1. Requires [2Fe-2S] cluster as cofactor. It depends on [4Fe-4S] cluster as a cofactor.

The protein resides in the mitochondrion inner membrane. The enzyme catalyses a ubiquinone + NADH + 5 H(+)(in) = a ubiquinol + NAD(+) + 4 H(+)(out). Its function is as follows. Core subunit of the mitochondrial membrane respiratory chain NADH dehydrogenase (Complex I) which catalyzes electron transfer from NADH through the respiratory chain, using ubiquinone as an electron acceptor. Essential for catalysing the entry and efficient transfer of electrons within complex I. Plays a key role in the assembly and stability of complex I and participates in the association of complex I with ubiquinol-cytochrome reductase complex (Complex III) to form supercomplexes. The chain is NADH-ubiquinone oxidoreductase 75 kDa subunit, mitochondrial (NDUFS1) from Macaca fascicularis (Crab-eating macaque).